Here is a 302-residue protein sequence, read N- to C-terminus: Glycine--tRNA ligase alpha subunit (302 aa).

The protein belongs to the class-II aminoacyl-tRNA synthetase family. Tetramer of two alpha and two beta subunits.

The protein resides in the cytoplasm. It carries out the reaction tRNA(Gly) + glycine + ATP = glycyl-tRNA(Gly) + AMP + diphosphate. This Haemophilus influenzae (strain 86-028NP) protein is Glycine--tRNA ligase alpha subunit.